We begin with the raw amino-acid sequence, 191 residues long: TATA-box-binding protein (191 aa).

2 tandem repeats follow at residues 18–94 (LQNV…AKIV) and 108–185 (IQNI…YPVL).

It belongs to the TBP family. In terms of assembly, belongs to the TFIID complex together with the TBP-associated factors (TAFs). Binds DNA as monomer.

The protein localises to the nucleus. In terms of biological role, general transcription factor that functions at the core of the DNA-binding multiprotein factor TFIID. Binding of TFIID to the TATA box is the initial transcriptional step of the pre-initiation complex (PIC), playing a role in the activation of eukaryotic genes transcribed by RNA polymerase II. In Acetabularia peniculus (Green alga), this protein is TATA-box-binding protein.